The sequence spans 201 residues: Peptidyl-tRNA hydrolase (201 aa).

Residue tyrosine 14 participates in tRNA binding. Histidine 19 serves as the catalytic Proton acceptor. TRNA contacts are provided by tyrosine 64, asparagine 66, and asparagine 113. Positions 178–201 (PGPAMNRFNRKPEPPESGGEVAAK) are disordered.

Belongs to the PTH family. Monomer.

Its subcellular location is the cytoplasm. It carries out the reaction an N-acyl-L-alpha-aminoacyl-tRNA + H2O = an N-acyl-L-amino acid + a tRNA + H(+). Its function is as follows. Hydrolyzes ribosome-free peptidyl-tRNAs (with 1 or more amino acids incorporated), which drop off the ribosome during protein synthesis, or as a result of ribosome stalling. Catalyzes the release of premature peptidyl moieties from peptidyl-tRNA molecules trapped in stalled 50S ribosomal subunits, and thus maintains levels of free tRNAs and 50S ribosomes. This chain is Peptidyl-tRNA hydrolase, found in Koribacter versatilis (strain Ellin345).